Reading from the N-terminus, the 204-residue chain is N-(5'-phosphoribosyl)anthranilate isomerase (204 aa).

It belongs to the TrpF family.

It carries out the reaction N-(5-phospho-beta-D-ribosyl)anthranilate = 1-(2-carboxyphenylamino)-1-deoxy-D-ribulose 5-phosphate. It functions in the pathway amino-acid biosynthesis; L-tryptophan biosynthesis; L-tryptophan from chorismate: step 3/5. The chain is N-(5'-phosphoribosyl)anthranilate isomerase from Geobacter sp. (strain M21).